The primary structure comprises 89 residues: Toxin To14 (89 aa).

The first 19 residues, 1 to 19 (MNCLMLIFVVFLLAFGVEC), serve as a signal peptide directing secretion. The LCN-type CS-alpha/beta domain occupies 21–85 (KDDYPVDTAK…SPTKTSGRCN (65 aa)). 4 cysteine pairs are disulfide-bonded: Cys33-Cys84, Cys37-Cys60, Cys46-Cys67, and Cys50-Cys69.

In terms of tissue distribution, expressed by the venom gland.

It localises to the secreted. Its function is as follows. Inhibits voltage-gated sodium channels (Nav). The polypeptide is Toxin To14 (Tityus obscurus (Amazonian scorpion)).